Reading from the N-terminus, the 488-residue chain is Histamine H1 receptor (488 aa).

Over 1 to 29 the chain is Extracellular; it reads MSLPNTSSASEDKMCEGNRTAMASPQLLP. Asn5 and Asn18 each carry an N-linked (GlcNAc...) asparagine glycan. The chain crosses the membrane as a helical span at residues 30–50; that stretch reads LVVVLSSISLVTVGLNLLVLY. Residues 51–64 are Cytoplasmic-facing; it reads AVRSERKLHTVGNL. A helical transmembrane segment spans residues 65-89; it reads YIVSLSVADLIVGAVVMPMNILYLI. Over 90–97 the chain is Extracellular; it reads MTKWSLGR. A helical transmembrane segment spans residues 98-123; the sequence is PLCLFWLSMDYVASTASIFSVFILCI. An intrachain disulfide couples Cys100 to Cys180. Histamine is bound by residues Asp107 and Thr112. An important for agonist binding region spans residues 107–112; that stretch reads DYVAST. At 124–144 the chain is on the cytoplasmic side; sequence DRYRSVQQPLRYLRYRTKTRA. 2 positions are modified to phosphothreonine: Thr140 and Thr142. A helical membrane pass occupies residues 145 to 164; that stretch reads SATILGAWFLSFLWVIPILG. Residues 165 to 188 lie on the Extracellular side of the membrane; it reads WHHFTPLAPELREDKCETDFYNVT. Residues 189-211 form a helical membrane-spanning segment; it reads WFKIMTAIINFYLPTLLMLWFYV. Histamine is bound at residue Asn198. Residues 212-417 lie on the Cytoplasmic side of the membrane; sequence KIYKAVRRHC…LNRERKAAKQ (206 aa). Ser230 is modified (phosphoserine). The tract at residues 245 to 337 is disordered; sequence KEGAKKPGKE…SQPKMDEQSL (93 aa). The span at 322–337 shows a compositional bias: polar residues; the sequence is ANDQTLSQPKMDEQSL. A phosphoserine mark is found at Ser344, Ser347, Ser381, Ser383, Ser397, and Ser399. Residues 418–441 traverse the membrane as a helical segment; that stretch reads LGCIMAAFILCWIPYFIFFMVIAF. Positions 425–429 are important for agonist binding; it reads FILCW. Tyr432 is a histamine binding site. Cys442 and Cys445 are oxidised to a cystine. The Extracellular portion of the chain corresponds to 442–447; sequence CNSCCS. The chain crosses the membrane as a helical span at residues 448–470; the sequence is EPVHMFTIWLGYINSTLNPLIYP. Residues 471 to 488 lie on the Cytoplasmic side of the membrane; that stretch reads LCNENFKKTFKKILHIRS.

Belongs to the G-protein coupled receptor 1 family. In terms of processing, phosphorylation at sites in the second and third cytoplasmic loops independently contribute to agonist-induced receptor down-regulation.

The protein resides in the cell membrane. Its function is as follows. G-protein-coupled receptor for histamine, a biogenic amine that functions as an immune modulator and a neurotransmitter. Through the H1 receptor, histamine mediates the contraction of smooth muscles and increases capillary permeability due to contraction of terminal venules. Also mediates neurotransmission in the central nervous system and thereby regulates circadian rhythms, emotional and locomotor activities as well as cognitive functions. The polypeptide is Histamine H1 receptor (Mus musculus (Mouse)).